We begin with the raw amino-acid sequence, 735 residues long: Protostadienol synthase helA (735 aa).

The stretch at 132–173 (KQEMCRYLLNVVNEDGGWGLFIQSPSTVFGTVMNYCMLRILG) is one PFTB 1 repeat. Aspartate 463 serves as the catalytic Proton donor. PFTB repeat units lie at residues 490-531 (LQQA…YENV), 567-607 (LSRS…ACMG), and 616-663 (CQRA…AVIG).

The protein belongs to the terpene cyclase/mutase family.

It carries out the reaction (S)-2,3-epoxysqualene = (17Z)-protosta-17(20),24-dien-3beta-ol. The protein operates within mycotoxin biosynthesis. Functionally, protostadienol synthase; part of the gene cluster that mediates the biosynthesis of helvolic acid, an antibacterial nortriterpenoid. Protostadienol synthase helA cyclizes (3S)-oxidosqualene to (17Z)-protosta-17(20),24-dien-3-beta-ol (protostadienol). The synthesis of protostadienol is followed by several steps of monooxygenation, dehydrogenation, and acyl transfer to yield the final helvolic acid. Following the cyclization to the tetracyclic protostadienol by helA, cytochrome P450 monooxygenases helB1-mediated and helB2-mediated oxidation at C-4 and C-16, acyltransferase helD2-dependent acetylation of 16-OH, oxidation of C-21 by cytochrome P450 monooxygenase helB4, and short chain dehydrogenase helC-dependent oxidative decarboxylation yield the fusidane skeleton. This intermediate is further modified in three additional steps mediated by the cytochrome P450 monooxygenase helB3, the acyltransferase helD1, and the 3-ketosteroid 1-dehydrogenase helE to give helvolic acid. Compared with the late stages in the biosynthesis of helvolic acid, enzymes involved in the early stage modifications act in a relatively strict order. The hydroxylation of C-16 by helB1 and subsequent acetylation by helD2 should occur before the helB3-mediated oxidation of C-21. C-4 demethylation in fusidane-type antibiotics proceeds in an unusual manner though it is also achieved by oxidative decarboxylation. The methyl group at C-4 beta position is oxidized by helB1 and subsequently removed by the short chain dehydrogenase helC. The polypeptide is Protostadienol synthase helA (Aspergillus fumigatus (strain ATCC MYA-4609 / CBS 101355 / FGSC A1100 / Af293) (Neosartorya fumigata)).